The primary structure comprises 129 residues: KVYGRCELAAAMKRLGLDNYRGYSLGNWVCAAKFESNFNTHATNRNTDGSTDYGILQINSRWWCNDGRTPGSRNLCNIPCSALLSSDITASVNCAKKIVSDGNGMNAWVAWRNRCKGTDVHAWIRGCRL.

The region spanning 1–129 is the C-type lysozyme domain; it reads KVYGRCELAA…VHAWIRGCRL (129 aa). Disulfide bonds link Cys-6–Cys-127, Cys-30–Cys-115, Cys-64–Cys-80, and Cys-76–Cys-94. Residues Glu-35 and Asp-52 contribute to the active site.

It belongs to the glycosyl hydrolase 22 family. Monomer.

It is found in the secreted. It catalyses the reaction Hydrolysis of (1-&gt;4)-beta-linkages between N-acetylmuramic acid and N-acetyl-D-glucosamine residues in a peptidoglycan and between N-acetyl-D-glucosamine residues in chitodextrins.. Functionally, lysozymes have primarily a bacteriolytic function; those in tissues and body fluids are associated with the monocyte-macrophage system and enhance the activity of immunoagents. The chain is Lysozyme C (LYZ) from Lophophorus impejanus (Himalayan monal pheasant).